The sequence spans 560 residues: MNNNIINLIAAIILSLSIIFGWQYFVVKPEQKKQQQQIAVQKAENLKKQQLKALVEPATGIVVQEESQVQRIKIESESLTGSISLKGLRFDDLILKKYKQDLSKNSPEVRLFSPANTENAYFAEVGLVSNLSSVKLPNNDTIWNSDSEILSPEKPVHLFWVNEDGVKFLVTITVDENYLFTIEQTIVNNSDKELPVQSYGLINRKYIAVEKAVNILHQGPIGCIDENLKEYSYDDIKDKKSEKFAASKVDWIGITDKYWLSSLIPDKSSNYSSNFNYALKQGTERYQVDFISPVQIIKPGENFSIKSRIFAGAKKVDLLDKYEKQYDIKLFDRAIDFGWFYIITKPVFYAMNFFYGYVGNFGVSILIVTVIIKLLMFTLANKSYRSMKKMKNLQPEIDRIKNLYSDDKARLNQEIMALYKKEKVNPVAGCLPILVQIPVFFSIYKVLYVTIEMRQAPFYGWIKDLSASDPTTIFNLFGLLPFSPPSFLMIGAWPILMAITMFLQQKMSPEPADPMQAQVMKFMPLIFLFMFSSFPVGLLIYWSWNNILSIIQQYYINKFN.

6 helical membrane passes run I5–F25, A334–F354, Y357–F377, L431–I451, L476–L496, and F522–W542.

The protein belongs to the OXA1/ALB3/YidC family. Type 1 subfamily. Interacts with the Sec translocase complex via SecD. Specifically interacts with transmembrane segments of nascent integral membrane proteins during membrane integration.

It is found in the cell inner membrane. Required for the insertion and/or proper folding and/or complex formation of integral membrane proteins into the membrane. Involved in integration of membrane proteins that insert both dependently and independently of the Sec translocase complex, as well as at least some lipoproteins. Aids folding of multispanning membrane proteins. The protein is Membrane protein insertase YidC of Rickettsia conorii (strain ATCC VR-613 / Malish 7).